The chain runs to 241 residues: Small ribosomal subunit protein bS6 (241 aa).

Residues 97–108 show a composition bias toward basic residues; that stretch reads KPKIRERNRKYT. The disordered stretch occupies residues 97-241; the sequence is KPKIRERNRK…YNNKKPQSSN (145 aa). The segment covering 109–118 has biased composition (basic and acidic residues); the sequence is PRRDRFEKPN. Low complexity-rich tracts occupy residues 130–151 and 161–182; these read QDQQ…QTSQ and DDFQ…NQSG. The segment covering 189–202 has biased composition (polar residues); the sequence is RQNQENIHQNSKNH.

Belongs to the bacterial ribosomal protein bS6 family.

Functionally, binds together with bS18 to 16S ribosomal RNA. The chain is Small ribosomal subunit protein bS6 from Mesomycoplasma hyopneumoniae (strain 232) (Mycoplasma hyopneumoniae).